Here is a 526-residue protein sequence, read N- to C-terminus: ATP synthase subunit alpha (526 aa).

171–178 is a binding site for ATP; that stretch reads GDRQTGKT.

The protein belongs to the ATPase alpha/beta chains family. F-type ATPases have 2 components, CF(1) - the catalytic core - and CF(0) - the membrane proton channel. CF(1) has five subunits: alpha(3), beta(3), gamma(1), delta(1), epsilon(1). CF(0) has four main subunits: a, b, b' and c.

It localises to the cell inner membrane. The enzyme catalyses ATP + H2O + 4 H(+)(in) = ADP + phosphate + 5 H(+)(out). Produces ATP from ADP in the presence of a proton gradient across the membrane. The alpha chain is a regulatory subunit. This is ATP synthase subunit alpha from Chlorobium limicola (strain DSM 245 / NBRC 103803 / 6330).